The chain runs to 142 residues: Large ribosomal subunit protein uL13 (142 aa).

This sequence belongs to the universal ribosomal protein uL13 family. Part of the 50S ribosomal subunit.

Its function is as follows. This protein is one of the early assembly proteins of the 50S ribosomal subunit, although it is not seen to bind rRNA by itself. It is important during the early stages of 50S assembly. This is Large ribosomal subunit protein uL13 from Stutzerimonas stutzeri (strain A1501) (Pseudomonas stutzeri).